The following is a 538-amino-acid chain: Diacylglycerol O-acyltransferase 1-1 (538 aa).

Disordered stretches follow at residues 1–39 (MVGS…GAIV) and 54–106 (AAAA…GGGR). The span at 69–83 (EAASGEPSSSSSSSP) shows a compositional bias: low complexity. 7 consecutive transmembrane segments (helical) span residues 136–156 (AIFK…LVAV), 186–206 (WPLL…FAVE), 218–238 (VATC…VLVI), 245–265 (VLSG…LVSF), 293–313 (NLQP…TLCY), 326–346 (GWLI…GFII), and 382–402 (LWLC…AEIL). Residues 409–415 (FYKDWWN) carry the FYXDWWN motif motif. 3 consecutive transmembrane segments (helical) span residues 451–471 (VAVL…VAVP), 474–494 (ILKF…VLTA), and 505–525 (VGNM…CLLL). H464 is an active-site residue.

This sequence belongs to the membrane-bound acyltransferase family. Sterol o-acyltransferase subfamily.

The protein resides in the endoplasmic reticulum membrane. The catalysed reaction is an acyl-CoA + a 1,2-diacyl-sn-glycerol = a triacyl-sn-glycerol + CoA. The protein operates within glycerolipid metabolism; triacylglycerol biosynthesis. Functionally, involved in triacylglycerol (TAG) synthesis. Catalyzes the acylation of the sn-3 hydroxy group of sn-1,2-diacylglycerol using acyl-CoA. The chain is Diacylglycerol O-acyltransferase 1-1 from Oryza sativa subsp. japonica (Rice).